A 331-amino-acid polypeptide reads, in one-letter code: Adenosine deaminase (331 aa).

Zn(2+)-binding residues include H12 and H14. 3 residues coordinate substrate: H14, D16, and G170. H197 provides a ligand contact to Zn(2+). E200 serves as the catalytic Proton donor. D278 is a Zn(2+) binding site.

It belongs to the metallo-dependent hydrolases superfamily. Adenosine and AMP deaminases family. Adenosine deaminase subfamily. Zn(2+) is required as a cofactor.

The enzyme catalyses adenosine + H2O + H(+) = inosine + NH4(+). It carries out the reaction 2'-deoxyadenosine + H2O + H(+) = 2'-deoxyinosine + NH4(+). Catalyzes the hydrolytic deamination of adenosine and 2-deoxyadenosine. This chain is Adenosine deaminase, found in Vibrio vulnificus (strain CMCP6).